Reading from the N-terminus, the 146-residue chain is MAFINLLILIILTLSSTPITTMSIPETNRRNATTNSYTDVALSARKGAFPPPRKLGEYSTNSTDYNLICKTCKRLSERNTCCFNYSCVDVSTNRFNCGSCGLVCNLGTRCCGGICVDIQKDNGNCGKCSNVCSPGQKCSFGFCDYA.

The first 23 residues, 1–23 (MAFINLLILIILTLSSTPITTMS), serve as a signal peptide directing secretion. N-linked (GlcNAc...) asparagine glycosylation is found at Asn31, Asn61, and Asn84.

Belongs to the STIG1 family. Post-translationally, glycosylated. As to expression, expressed exclusively in the stigmatic secretory zone.

Its subcellular location is the secreted. Involved in the temporal regulation of the exudate secretion onto the stigma. This is Protein STIG1 from Nicotiana tabacum (Common tobacco).